We begin with the raw amino-acid sequence, 648 residues long: Bifunctional protein TilS/HprT (648 aa).

29–34 contributes to the ATP binding site; it reads SGGPDS. Mg(2+) is bound at residue Asp-627.

In the N-terminal section; belongs to the tRNA(Ile)-lysidine synthase family. It in the C-terminal section; belongs to the purine/pyrimidine phosphoribosyltransferase family. The cofactor is Mg(2+).

The protein resides in the cytoplasm. The enzyme catalyses IMP + diphosphate = hypoxanthine + 5-phospho-alpha-D-ribose 1-diphosphate. The catalysed reaction is GMP + diphosphate = guanine + 5-phospho-alpha-D-ribose 1-diphosphate. It catalyses the reaction cytidine(34) in tRNA(Ile2) + L-lysine + ATP = lysidine(34) in tRNA(Ile2) + AMP + diphosphate + H(+). Functionally, ligates lysine onto the cytidine present at position 34 of the AUA codon-specific tRNA(Ile) that contains the anticodon CAU, in an ATP-dependent manner. Cytidine is converted to lysidine, thus changing the amino acid specificity of the tRNA from methionine to isoleucine. This chain is Bifunctional protein TilS/HprT (tilS/hprT), found in Listeria monocytogenes serovar 1/2a (strain ATCC BAA-679 / EGD-e).